A 41-amino-acid polypeptide reads, in one-letter code: Photosystem I reaction center subunit IX (41 aa).

A helical transmembrane segment spans residues 7–27 (YLSTAPVLATLWFGLLAGILI).

This sequence belongs to the PsaJ family.

It is found in the plastid. The protein localises to the chloroplast thylakoid membrane. Functionally, may help in the organization of the PsaE and PsaF subunits. In Chara vulgaris (Common stonewort), this protein is Photosystem I reaction center subunit IX.